Reading from the N-terminus, the 634-residue chain is Transmembrane and coiled-coil domain-containing protein 4 (634 aa).

Positions 150–190 form a coiled coil; it reads EELDVLEEMFLESLKEIKEEESEMAEASRKKKENRRKWKRY. Transmembrane regions (helical) follow at residues 203–223, 231–251, and 346–366; these read VIGV…ATII, LGSA…GAGL, and LSGI…ANVI. The interval 542–612 is disordered; that stretch reads EPRQAAAAAS…ERPPICSHGM (71 aa). The span at 552 to 583 shows a compositional bias: polar residues; the sequence is SGETPHQVGQTQGPISGDTSKLAMSTDPSQAQ.

It belongs to the TMCO4 family.

Its subcellular location is the membrane. This is Transmembrane and coiled-coil domain-containing protein 4 (TMCO4) from Homo sapiens (Human).